The chain runs to 133 residues: UPF0102 protein Anae109_1947 (133 aa).

Belongs to the UPF0102 family.

This is UPF0102 protein Anae109_1947 from Anaeromyxobacter sp. (strain Fw109-5).